The primary structure comprises 388 residues: Succinate--CoA ligase [ADP-forming] subunit beta (388 aa).

In terms of domain architecture, ATP-grasp spans 9 to 244 (KQLFAEFGLP…PSQEDEREAH (236 aa)). ATP is bound by residues K46, 53–55 (GRG), E99, S102, and E107. Residues N199 and D213 each coordinate Mg(2+). Substrate contacts are provided by residues N264 and 321 to 323 (GIV).

It belongs to the succinate/malate CoA ligase beta subunit family. Heterotetramer of two alpha and two beta subunits. It depends on Mg(2+) as a cofactor.

The enzyme catalyses succinate + ATP + CoA = succinyl-CoA + ADP + phosphate. It catalyses the reaction GTP + succinate + CoA = succinyl-CoA + GDP + phosphate. It participates in carbohydrate metabolism; tricarboxylic acid cycle; succinate from succinyl-CoA (ligase route): step 1/1. Functionally, succinyl-CoA synthetase functions in the citric acid cycle (TCA), coupling the hydrolysis of succinyl-CoA to the synthesis of either ATP or GTP and thus represents the only step of substrate-level phosphorylation in the TCA. The beta subunit provides nucleotide specificity of the enzyme and binds the substrate succinate, while the binding sites for coenzyme A and phosphate are found in the alpha subunit. This chain is Succinate--CoA ligase [ADP-forming] subunit beta, found in Vibrio parahaemolyticus serotype O3:K6 (strain RIMD 2210633).